A 147-amino-acid polypeptide reads, in one-letter code: Cyanate hydratase (147 aa).

Residues R88, E91, and S114 contribute to the active site.

It belongs to the cyanase family.

It catalyses the reaction cyanate + hydrogencarbonate + 3 H(+) = NH4(+) + 2 CO2. Its function is as follows. Catalyzes the reaction of cyanate with bicarbonate to produce ammonia and carbon dioxide. This Methylobacillus flagellatus (strain ATCC 51484 / DSM 6875 / VKM B-1610 / KT) protein is Cyanate hydratase.